Here is a 332-residue protein sequence, read N- to C-terminus: Probable farnesyl diphosphate synthase (332 aa).

Isopentenyl diphosphate contacts are provided by Lys-75, Arg-78, and His-107. 2 residues coordinate Mg(2+): Asp-114 and Asp-120. Arg-125 lines the (2E)-geranyl diphosphate pocket. Arg-126 is a binding site for isopentenyl diphosphate. (2E)-geranyl diphosphate is bound by residues Lys-208, Gln-250, and Lys-267.

The protein belongs to the FPP/GGPP synthase family. Requires Mg(2+) as cofactor.

It localises to the cytoplasm. It carries out the reaction isopentenyl diphosphate + (2E)-geranyl diphosphate = (2E,6E)-farnesyl diphosphate + diphosphate. In Sinorhizobium fredii (strain NBRC 101917 / NGR234), this protein is Probable farnesyl diphosphate synthase.